Here is an 81-residue protein sequence, read N- to C-terminus: MKTLLLTLVVVTIVCLDLGYTLKCNKLVPLFYKTCPAGKNLCYKMFMVATPKVPVKRGCIDVCPKNSALVKYVCCNTDRCN.

Positions 1-21 are cleaved as a signal peptide; that stretch reads MKTLLLTLVVVTIVCLDLGYT. 4 cysteine pairs are disulfide-bonded: cysteine 24–cysteine 42, cysteine 35–cysteine 59, cysteine 63–cysteine 74, and cysteine 75–cysteine 80.

This sequence belongs to the three-finger toxin family. Short-chain subfamily. Type IA cytotoxin sub-subfamily. Monomer in solution; Homodimer and oligomer in the presence of negatively charged lipids forming a pore with a size ranging between 20 and 30 Angstroms. As to expression, expressed by the venom gland.

The protein localises to the secreted. It localises to the target cell membrane. Its function is as follows. Shows cytolytic activity on many different cells by forming pore in lipid membranes. In vivo, increases heart rate or kills the animal by cardiac arrest. In addition, it binds to heparin with high affinity, interacts with Kv channel-interacting protein 1 (KCNIP1) in a calcium-independent manner, and binds to integrin alpha-V/beta-3 (ITGAV/ITGB3) with moderate affinity. In Naja atra (Chinese cobra), this protein is Cytotoxin 3b.